The primary structure comprises 366 residues: Phospho-N-acetylmuramoyl-pentapeptide-transferase (366 aa).

Helical transmembrane passes span 27–47, 71–91, 93–113, 138–158, 174–194, 205–225, 245–265, 268–288, 294–314, and 343–363; these read AALF…INSL, TPTM…LLWA, LSNV…AIGF, FVIA…SGIA, FMIN…VGAG, GLAI…AYLA, LAVV…FNAP, AIFM…TVAV, IVMA…IIQV, and QVVI…LSTL.

This sequence belongs to the glycosyltransferase 4 family. MraY subfamily. It depends on Mg(2+) as a cofactor.

The protein localises to the cell inner membrane. It catalyses the reaction UDP-N-acetyl-alpha-D-muramoyl-L-alanyl-gamma-D-glutamyl-meso-2,6-diaminopimeloyl-D-alanyl-D-alanine + di-trans,octa-cis-undecaprenyl phosphate = di-trans,octa-cis-undecaprenyl diphospho-N-acetyl-alpha-D-muramoyl-L-alanyl-D-glutamyl-meso-2,6-diaminopimeloyl-D-alanyl-D-alanine + UMP. It participates in cell wall biogenesis; peptidoglycan biosynthesis. In terms of biological role, catalyzes the initial step of the lipid cycle reactions in the biosynthesis of the cell wall peptidoglycan: transfers peptidoglycan precursor phospho-MurNAc-pentapeptide from UDP-MurNAc-pentapeptide onto the lipid carrier undecaprenyl phosphate, yielding undecaprenyl-pyrophosphoryl-MurNAc-pentapeptide, known as lipid I. The protein is Phospho-N-acetylmuramoyl-pentapeptide-transferase of Rhizobium johnstonii (strain DSM 114642 / LMG 32736 / 3841) (Rhizobium leguminosarum bv. viciae).